Here is an 801-residue protein sequence, read N- to C-terminus: Squamosa promoter-binding-like protein 7 (801 aa).

Disordered stretches follow at residues 1–23 (MSSLSQSPPPPEMDIQPPALVND) and 59–91 (SPPLPPLIPTQTPAESELDPSPEESGSGSDRVR). An SBP-type; atypical zinc finger spans residues 135–212 (VARCQVPDCE…ERHNNRRKRK (78 aa)). Residues Cys138, Cys143, Cys160, Cys163, Cys179, Cys182, His186, and Cys198 each contribute to the Zn(2+) site. The Bipartite nuclear localization signal signature appears at 195–211 (KRSCRRKLERHNNRRKR). The segment covering 203–213 (ERHNNRRKRKP) has biased composition (basic residues). 2 disordered regions span residues 203–258 (ERHN…PSLI) and 286–313 (GSGEAQPDEGMNDTKFERSPSNGDNKSA). Positions 222–233 (EQQQVLSQNDNS) are enriched in polar residues. Residues 249–258 (QRAEEEPSLI) show a composition bias toward basic and acidic residues. Residues 304–313 (SPSNGDNKSA) are compositionally biased toward polar residues.

In terms of assembly, homodimer. Interacts with KIN17. Interacts with HY5. The cofactor is Zn(2+). In terms of tissue distribution, expressed in roots rosette leaves, cauline leaves, stems, flowers and siliques.

Its subcellular location is the nucleus speckle. Functionally, transcription factor that participates in reprogramming global gene expression during copper deficiency in order to improve the metal uptake and prioritize its distribution to copper proteins of major importance. Binds directly to 5'-GTAC-3' motifs in the microRNA (miRNA) promoter of the stress-responsive miRNAs miR398b and miR398c to activate their transcription. During copper deficiency, activates the copper transporters COPT1 and COPT2, and the copper chaperone CCH, directly or indirectly via miRNAs. Required for the expression of the miRNAs miR397, miR408 and miR857. Acts coordinately with HY5 to regulate miR408 and its target genes in response to changes in light and copper conditions. Activates miR857 and its target genes in response to low copper conditions. Involved in cadmium stress response by regulating miR397a, miR398b, miR398c and miR857. Required for iron homeostasis during copper deficiency. This Arabidopsis thaliana (Mouse-ear cress) protein is Squamosa promoter-binding-like protein 7 (SPL7).